The sequence spans 277 residues: MNDNDNIDKDNIDTMNDNNKLIIGLDEAGRGPVLGPMVIALVKIKGQDLKNFEKLDIKDSKKHSKNRREELFEMIINNYDVRYEILEAKTIDKLMNTINLNKIELMAFTKLINSVLKEEYPNYKENSKIQTATPQIEIYIDACSSNEKAFANQIKSKLIVNDENNIKIIAEHKADENYKIVSAASIIAKVIRDRKIEEYKKIYGEIGSGYPSDKITQKYLANYVEKNRELPEIARKSWNTSKKLLKKIEDKNTVDKIKDSKRIKTNIELKQTKLVEF.

Positions 20 to 250 (KLIIGLDEAG…SKKLLKKIED (231 aa)) constitute an RNase H type-2 domain. A divalent metal cation is bound by residues Asp-26, Glu-27, and Asp-141.

The protein belongs to the RNase HII family. It depends on Mn(2+) as a cofactor. The cofactor is Mg(2+).

It is found in the cytoplasm. It catalyses the reaction Endonucleolytic cleavage to 5'-phosphomonoester.. Functionally, endonuclease that specifically degrades the RNA of RNA-DNA hybrids. This Methanococcus aeolicus (strain ATCC BAA-1280 / DSM 17508 / OCM 812 / Nankai-3) protein is Ribonuclease HII.